Consider the following 416-residue polypeptide: Iron-regulated transcriptional activator AFT2 (416 aa).

Aspartate 53 is a Zn(2+) binding site. Arginine 54, histidine 55, lysine 58, isoleucine 74, glutamate 75, arginine 76, serine 77, aspartate 78, and lysine 81 together coordinate DNA. Position 55 (histidine 55) interacts with Zn(2+). Position 86 (cysteine 86) interacts with Zn(2+). Serine 88 contacts DNA. Cysteine 109 lines the Zn(2+) pocket. 2 residues coordinate DNA: valine 119 and arginine 120. Zn(2+)-binding residues include histidine 133 and histidine 135. Positions 157 and 159 each coordinate DNA. The CDC [2Fe-2S] cluster binding motif signature appears at 187–189 (CDC).

In terms of assembly, homodimer. Dimerization decreases the DNA-binding activity.

Its subcellular location is the nucleus. With respect to regulation, dimerization via the binding of Fe(2+) or a [2Fe-2S] cluster decreases the DNA-binding activity. Transcription factor required for iron homeostasis and resistance to oxidative stress. With AFT1, activates the gene expression in response to low-iron conditions, also called iron regulon. Recognizes the consensus iron-responsive element (Fe-RE) sequence 5'-CACCC-3' in the promoters of target genes. The transcription activation by AFT1 and AFT2 depends on the mitochondrial iron-sulfur protein biosynthesis pathway. In high iron condition, the presence of iron leads to dimerization, which in turn leads to a decrease in DNA affinity. The protein is Iron-regulated transcriptional activator AFT2 of Saccharomyces cerevisiae (strain ATCC 204508 / S288c) (Baker's yeast).